A 171-amino-acid polypeptide reads, in one-letter code: CS1 fimbrial subunit A (171 aa).

The first 23 residues, 1–23 (MKLKKTIGAMALATLFATMGASA), serve as a signal peptide directing secretion.

This sequence belongs to the fimbrial CS1 protein family.

It is found in the fimbrium. Its function is as follows. Fimbriae (also called pili), polar filaments radiating from the surface of the bacterium to a length of 0.5-1.5 micrometers and numbering 100-300 per cell, enable bacteria to colonize the epithelium of specific host organs. This Escherichia coli protein is CS1 fimbrial subunit A (csoA).